A 473-amino-acid polypeptide reads, in one-letter code: ATP synthase subunit beta (473 aa).

Position 158–165 (158–165 (GGAGVGKT)) interacts with ATP.

The protein belongs to the ATPase alpha/beta chains family. As to quaternary structure, F-type ATPases have 2 components, CF(1) - the catalytic core - and CF(0) - the membrane proton channel. CF(1) has five subunits: alpha(3), beta(3), gamma(1), delta(1), epsilon(1). CF(0) has three main subunits: a(1), b(2) and c(9-12). The alpha and beta chains form an alternating ring which encloses part of the gamma chain. CF(1) is attached to CF(0) by a central stalk formed by the gamma and epsilon chains, while a peripheral stalk is formed by the delta and b chains. The F(1)F(0) complex interacts with SpoIIIJ and YqjG; YqgA is found in the same complex.

The protein resides in the cell membrane. Its subcellular location is the membrane raft. The enzyme catalyses ATP + H2O + 4 H(+)(in) = ADP + phosphate + 5 H(+)(out). Functionally, produces ATP from ADP in the presence of a proton gradient across the membrane. The catalytic sites are hosted primarily by the beta subunits. This is ATP synthase subunit beta from Bacillus subtilis (strain 168).